A 311-amino-acid chain; its full sequence is Putative UPF0607 protein ENSP00000382826 (311 aa).

Positions 48–61 (AEEPKEATEVKDQV) are enriched in basic and acidic residues. 3 disordered regions span residues 48–99 (AEEP…WYNP), 186–229 (GLLM…PLQL), and 291–311 (RKQL…GSCL). Residues 78 to 97 (EAASTSRPLETQGNLTSSWY) show a composition bias toward polar residues. Composition is skewed to basic residues over residues 213-222 (AGHRSRKRKL) and 291-305 (RKQL…RQGR).

It belongs to the UPF0607 family.

The sequence is that of Putative UPF0607 protein ENSP00000382826 from Homo sapiens (Human).